We begin with the raw amino-acid sequence, 156 residues long: Transcriptional repressor NrdR (156 aa).

A zinc finger lies at 3–34; it reads CPKCNSTHSRVVDSRHADEANAIRRRRECENC. Positions 49–139 constitute an ATP-cone domain; it reads LIVVKKDGTR…VYKEFKDVDQ (91 aa).

Belongs to the NrdR family. Zn(2+) serves as cofactor.

In terms of biological role, negatively regulates transcription of bacterial ribonucleotide reductase nrd genes and operons by binding to NrdR-boxes. This is Transcriptional repressor NrdR from Staphylococcus epidermidis (strain ATCC 35984 / DSM 28319 / BCRC 17069 / CCUG 31568 / BM 3577 / RP62A).